The sequence spans 411 residues: Glutamate dehydrogenase 3, mitochondrial (411 aa).

The transit peptide at M1–L18 directs the protein to the mitochondrion. K102 is a catalytic residue.

It belongs to the Glu/Leu/Phe/Val dehydrogenases family. Barely expressed in leaves, spikelets and roots. Glumes and stamens specific accumulation.

Its subcellular location is the mitochondrion. It carries out the reaction L-glutamate + NAD(+) + H2O = 2-oxoglutarate + NH4(+) + NADH + H(+). The catalysed reaction is L-glutamate + NADP(+) + H2O = 2-oxoglutarate + NH4(+) + NADPH + H(+). The chain is Glutamate dehydrogenase 3, mitochondrial (GDH3) from Oryza sativa subsp. japonica (Rice).